A 612-amino-acid chain; its full sequence is ETS-related transcription factor Elf-1 (612 aa).

4 positions are modified to phosphoserine: S110, S163, S167, and S168. Polar residues predominate over residues 156-169 (VQETNADSPGASSP). The tract at residues 156–199 (VQETNADSPGASSPEQRKRKKGRKTKPPRPDSPTTTPNISVKKK) is disordered. Residues 172–182 (RKRKKGRKTKP) show a composition bias toward basic residues. S187 carries the phosphoserine modification. A Phosphothreonine modification is found at T190. Residues 208–290 (IYLWEFLLAL…EGQRLVYQFK (83 aa)) constitute a DNA-binding region (ETS). The disordered stretch occupies residues 300–361 (DDEDPSSSIE…AANPKDPVEV (62 aa)). A compositionally biased stretch (low complexity) spans 305 to 322 (SSSIESSDQSLSSTTASS). Over residues 323 to 335 (RNQANRSRVSSSP) the composition is skewed to polar residues. Position 431 is a phosphoserine (S431). Positions 562–577 (EVEKKAEDDLNEDAEK) are enriched in basic and acidic residues. The interval 562–586 (EVEKKAEDDLNEDAEKSAQQPQPYV) is disordered.

The protein belongs to the ETS family. As to quaternary structure, binds to the underphosphorylated form of RB. May interact with other transcription factors in order to regulate specific genes. Interacts with RUNX1. Interacts with SP1; the interaction is inhibited by glycosylation of SP1. In terms of tissue distribution, predominantly found in hematopoietic cells. Detected in other cell types such as fibroblasts.

It is found in the nucleus. Transcription factor that activates the LYN and BLK promoters. This is ETS-related transcription factor Elf-1 (Elf1) from Mus musculus (Mouse).